A 249-amino-acid chain; its full sequence is Acetylglutamate kinase (249 aa).

Residues 42-43, Arg-64, and Asn-155 each bind substrate; that span reads GG.

Belongs to the acetylglutamate kinase family. ArgB subfamily.

The protein resides in the cytoplasm. It carries out the reaction N-acetyl-L-glutamate + ATP = N-acetyl-L-glutamyl 5-phosphate + ADP. It participates in amino-acid biosynthesis; L-arginine biosynthesis; N(2)-acetyl-L-ornithine from L-glutamate: step 2/4. Its function is as follows. Catalyzes the ATP-dependent phosphorylation of N-acetyl-L-glutamate. This Endomicrobium trichonymphae protein is Acetylglutamate kinase.